We begin with the raw amino-acid sequence, 581 residues long: Arginine--tRNA ligase (581 aa).

Positions 126–136 (PNLAKEMHVGH) match the 'HIGH' region motif.

The protein belongs to the class-I aminoacyl-tRNA synthetase family. As to quaternary structure, monomer.

The protein resides in the cytoplasm. The enzyme catalyses tRNA(Arg) + L-arginine + ATP = L-arginyl-tRNA(Arg) + AMP + diphosphate. The sequence is that of Arginine--tRNA ligase from Shewanella sp. (strain ANA-3).